A 251-amino-acid chain; its full sequence is Hydroxyacylglutathione hydrolase (251 aa).

Positions 53, 55, 57, 58, 110, 127, and 165 each coordinate Zn(2+).

It belongs to the metallo-beta-lactamase superfamily. Glyoxalase II family. Monomer. Zn(2+) is required as a cofactor.

It carries out the reaction an S-(2-hydroxyacyl)glutathione + H2O = a 2-hydroxy carboxylate + glutathione + H(+). It functions in the pathway secondary metabolite metabolism; methylglyoxal degradation; (R)-lactate from methylglyoxal: step 2/2. Functionally, thiolesterase that catalyzes the hydrolysis of S-D-lactoyl-glutathione to form glutathione and D-lactic acid. In Salmonella agona (strain SL483), this protein is Hydroxyacylglutathione hydrolase.